Reading from the N-terminus, the 58-residue chain is UPF0391 membrane protein Sfri_4000 (58 aa).

A run of 2 helical transmembrane segments spans residues 6–26 (LMFL…IAGA) and 27–47 (AAGI…ISLV).

Belongs to the UPF0391 family.

The protein localises to the cell membrane. In Shewanella frigidimarina (strain NCIMB 400), this protein is UPF0391 membrane protein Sfri_4000.